We begin with the raw amino-acid sequence, 207 residues long: ATP-dependent Clp protease proteolytic subunit (207 aa).

Catalysis depends on Ser-111, which acts as the Nucleophile. The active site involves His-136.

It belongs to the peptidase S14 family. In terms of assembly, fourteen ClpP subunits assemble into 2 heptameric rings which stack back to back to give a disk-like structure with a central cavity, resembling the structure of eukaryotic proteasomes. Component of the ClpAP and ClpXP complexes.

Its subcellular location is the cytoplasm. The catalysed reaction is Hydrolysis of proteins to small peptides in the presence of ATP and magnesium. alpha-casein is the usual test substrate. In the absence of ATP, only oligopeptides shorter than five residues are hydrolyzed (such as succinyl-Leu-Tyr-|-NHMec, and Leu-Tyr-Leu-|-Tyr-Trp, in which cleavage of the -Tyr-|-Leu- and -Tyr-|-Trp bonds also occurs).. Cleaves peptides in various proteins in a process that requires ATP hydrolysis. Has a chymotrypsin-like activity. Plays a major role in the degradation of misfolded proteins. In Salmonella enteritidis PT4 (strain P125109), this protein is ATP-dependent Clp protease proteolytic subunit.